A 360-amino-acid polypeptide reads, in one-letter code: uncharacterized protein (360 aa).

This is an uncharacterized protein from Ostreid herpesvirus 1 (isolate France) (OsHV-1).